The following is a 586-amino-acid chain: Pyruvate kinase (586 aa).

Arg32 provides a ligand contact to substrate. 4 residues coordinate K(+): Asn34, Ser36, Asp66, and Thr67. Residue 34-37 (NFSH) coordinates ATP. 2 residues coordinate ATP: Arg73 and Lys156. Mg(2+) is bound at residue Glu222. The substrate site is built by Gly245, Asp246, and Thr278. Residue Asp246 coordinates Mg(2+).

This sequence belongs to the pyruvate kinase family. In the C-terminal section; belongs to the PEP-utilizing enzyme family. Homotetramer. Requires Mg(2+) as cofactor. The cofactor is K(+).

The catalysed reaction is pyruvate + ATP = phosphoenolpyruvate + ADP + H(+). It participates in carbohydrate degradation; glycolysis; pyruvate from D-glyceraldehyde 3-phosphate: step 5/5. This chain is Pyruvate kinase (pyk), found in Sporosarcina psychrophila (Bacillus psychrophilus).